The chain runs to 493 residues: Glycerol kinase (493 aa).

T11 contacts ADP. Residues T11, T12, and S13 each contribute to the ATP site. T11 contacts sn-glycerol 3-phosphate. Residue R15 coordinates ADP. Sn-glycerol 3-phosphate-binding residues include R80, E81, Y132, and D241. 5 residues coordinate glycerol: R80, E81, Y132, D241, and Q242. ADP contacts are provided by T263 and G306. ATP-binding residues include T263, G306, Q310, and G408. G408 lines the ADP pocket.

It belongs to the FGGY kinase family.

The enzyme catalyses glycerol + ATP = sn-glycerol 3-phosphate + ADP + H(+). The protein operates within polyol metabolism; glycerol degradation via glycerol kinase pathway; sn-glycerol 3-phosphate from glycerol: step 1/1. With respect to regulation, inhibited by fructose 1,6-bisphosphate (FBP). Key enzyme in the regulation of glycerol uptake and metabolism. Catalyzes the phosphorylation of glycerol to yield sn-glycerol 3-phosphate. This Cereibacter sphaeroides (strain ATCC 17023 / DSM 158 / JCM 6121 / CCUG 31486 / LMG 2827 / NBRC 12203 / NCIMB 8253 / ATH 2.4.1.) (Rhodobacter sphaeroides) protein is Glycerol kinase.